The following is a 264-amino-acid chain: uncharacterized protein (264 aa).

Positions 235-264 (ESSDEEDNDDDIINNDTNNDINNDDIEIKT) are disordered. The span at 237–247 (SDEEDNDDDII) shows a compositional bias: acidic residues.

This is an uncharacterized protein from Acanthamoeba polyphaga mimivirus (APMV).